We begin with the raw amino-acid sequence, 151 residues long: Flagellar assembly factor FliW (151 aa).

Belongs to the FliW family. In terms of assembly, interacts with translational regulator CsrA and flagellin(s).

The protein localises to the cytoplasm. Functionally, acts as an anti-CsrA protein, binds CsrA and prevents it from repressing translation of its target genes, one of which is flagellin. Binds to flagellin and participates in the assembly of the flagellum. This is Flagellar assembly factor FliW from Natranaerobius thermophilus (strain ATCC BAA-1301 / DSM 18059 / JW/NM-WN-LF).